A 226-amino-acid polypeptide reads, in one-letter code: uncharacterized protein (226 aa).

This sequence belongs to the SSM1 family.

This is an uncharacterized protein from Schizosaccharomyces pombe (strain 972 / ATCC 24843) (Fission yeast).